A 490-amino-acid chain; its full sequence is Glutamate--tRNA ligase 2 (490 aa).

The 'HIGH' region motif lies at 33–43; that stretch reads PSPTGYLHIGG. The 'KMSKS' region motif lies at 262-266; the sequence is KLSKR. ATP is bound at residue K265.

This sequence belongs to the class-I aminoacyl-tRNA synthetase family. Glutamate--tRNA ligase type 1 subfamily. As to quaternary structure, monomer.

It localises to the cytoplasm. It carries out the reaction tRNA(Glu) + L-glutamate + ATP = L-glutamyl-tRNA(Glu) + AMP + diphosphate. Catalyzes the attachment of glutamate to tRNA(Glu) in a two-step reaction: glutamate is first activated by ATP to form Glu-AMP and then transferred to the acceptor end of tRNA(Glu). This is Glutamate--tRNA ligase 2 from Parvibaculum lavamentivorans (strain DS-1 / DSM 13023 / NCIMB 13966).